The primary structure comprises 117 residues: MSRVKGGVRTRARHKKILKLAKGYFGAKSKNFRIANQAVMKSLVYAYRDRRARKRDFRKLWITRINAAARMNGLSYSKFMNGLKKSGIALNRKMLAEMAVNDAEAFAQLVEKVKAVI.

It belongs to the bacterial ribosomal protein bL20 family.

Its function is as follows. Binds directly to 23S ribosomal RNA and is necessary for the in vitro assembly process of the 50S ribosomal subunit. It is not involved in the protein synthesizing functions of that subunit. This Acetivibrio thermocellus (strain ATCC 27405 / DSM 1237 / JCM 9322 / NBRC 103400 / NCIMB 10682 / NRRL B-4536 / VPI 7372) (Clostridium thermocellum) protein is Large ribosomal subunit protein bL20.